Reading from the N-terminus, the 447-residue chain is Hemogen (447 aa).

The tract at residues methionine 1–leucine 91 is disordered. The tract at residues glutamine 7–glutamate 86 is necessary for nuclear localization. Composition is skewed to basic and acidic residues over residues glutamine 14 to valine 25 and arginine 35 to glutamate 49. Residues glutamate 59–glutamine 78 show a composition bias toward basic residues. 2 positions are modified to phosphoserine: serine 89 and serine 122. A disordered region spans residues glutamine 137 to asparagine 156. Serine 200 carries the post-translational modification Phosphoserine. Disordered stretches follow at residues alanine 210–proline 280 and alanine 306–glutamate 337. A Phosphothreonine modification is found at threonine 217. Residues alanine 306–threonine 316 show a composition bias toward basic and acidic residues.

It localises to the nucleus. Functionally, regulates the proliferation and differentiation of hematopoietic cells. Overexpression block the TPA-induced megakaryocytic differentiation in the K562 cell model. May also prevent cell apoptosis through the activation of the nuclear factor-kappa B (NF-kB). The polypeptide is Hemogen (HEMGN) (Bos taurus (Bovine)).